The primary structure comprises 152 residues: Large ribosomal subunit protein bL9 (152 aa).

This sequence belongs to the bacterial ribosomal protein bL9 family.

Functionally, binds to the 23S rRNA. This chain is Large ribosomal subunit protein bL9, found in Trichormus variabilis (strain ATCC 29413 / PCC 7937) (Anabaena variabilis).